Reading from the N-terminus, the 173-residue chain is Crossover junction endodeoxyribonuclease RuvC (173 aa).

Active-site residues include Asp-8, Glu-67, and Asp-139. Mg(2+)-binding residues include Asp-8, Glu-67, and Asp-139.

This sequence belongs to the RuvC family. Homodimer which binds Holliday junction (HJ) DNA. The HJ becomes 2-fold symmetrical on binding to RuvC with unstacked arms; it has a different conformation from HJ DNA in complex with RuvA. In the full resolvosome a probable DNA-RuvA(4)-RuvB(12)-RuvC(2) complex forms which resolves the HJ. The cofactor is Mg(2+).

It localises to the cytoplasm. It carries out the reaction Endonucleolytic cleavage at a junction such as a reciprocal single-stranded crossover between two homologous DNA duplexes (Holliday junction).. In terms of biological role, the RuvA-RuvB-RuvC complex processes Holliday junction (HJ) DNA during genetic recombination and DNA repair. Endonuclease that resolves HJ intermediates. Cleaves cruciform DNA by making single-stranded nicks across the HJ at symmetrical positions within the homologous arms, yielding a 5'-phosphate and a 3'-hydroxyl group; requires a central core of homology in the junction. The consensus cleavage sequence is 5'-(A/T)TT(C/G)-3'. Cleavage occurs on the 3'-side of the TT dinucleotide at the point of strand exchange. HJ branch migration catalyzed by RuvA-RuvB allows RuvC to scan DNA until it finds its consensus sequence, where it cleaves and resolves the cruciform DNA. This chain is Crossover junction endodeoxyribonuclease RuvC, found in Erwinia tasmaniensis (strain DSM 17950 / CFBP 7177 / CIP 109463 / NCPPB 4357 / Et1/99).